The following is a 172-amino-acid chain: Small ribosomal subunit protein uS5 (172 aa).

Positions 17–80 constitute an S5 DRBM domain; that stretch reads LREKMISVNR…EQARRNMFKV (64 aa).

It belongs to the universal ribosomal protein uS5 family. As to quaternary structure, part of the 30S ribosomal subunit. Contacts proteins S4 and S8.

With S4 and S12 plays an important role in translational accuracy. Its function is as follows. Located at the back of the 30S subunit body where it stabilizes the conformation of the head with respect to the body. The chain is Small ribosomal subunit protein uS5 from Paraburkholderia phytofirmans (strain DSM 17436 / LMG 22146 / PsJN) (Burkholderia phytofirmans).